The primary structure comprises 186 residues: NADH-quinone oxidoreductase subunit I (186 aa).

2 4Fe-4S ferredoxin-type domains span residues 70–100 (LTTR…IQSA) and 113–142 (DRFE…MSKD). [4Fe-4S] cluster contacts are provided by Cys-80, Cys-83, Cys-86, Cys-90, Cys-122, Cys-125, Cys-128, and Cys-132.

The protein belongs to the complex I 23 kDa subunit family. NDH-1 is composed of 14 different subunits. Subunits NuoA, H, J, K, L, M, N constitute the membrane sector of the complex. Requires [4Fe-4S] cluster as cofactor.

The protein resides in the cell inner membrane. The enzyme catalyses a quinone + NADH + 5 H(+)(in) = a quinol + NAD(+) + 4 H(+)(out). NDH-1 shuttles electrons from NADH, via FMN and iron-sulfur (Fe-S) centers, to quinones in the respiratory chain. The immediate electron acceptor for the enzyme in this species is believed to be ubiquinone. Couples the redox reaction to proton translocation (for every two electrons transferred, four hydrogen ions are translocated across the cytoplasmic membrane), and thus conserves the redox energy in a proton gradient. In Pelobacter propionicus (strain DSM 2379 / NBRC 103807 / OttBd1), this protein is NADH-quinone oxidoreductase subunit I.